Consider the following 773-residue polypeptide: LON peptidase N-terminal domain and RING finger protein 1 (773 aa).

The interval 1 to 29 (MSSPAVARTSPGGSREMAPAPQGRGRFWE) is disordered. One copy of the TPR 1 repeat lies at 48-81 (WELLLRRGELLALGGHLKGALEAFAAALRRGAPA). The RING-type 1 zinc-finger motif lies at 123–159 (CLGCRGFLSEPVTVPCGHSYCRRCLRRELRARCRLCR). 3 TPR repeats span residues 212 to 244 (ARAAGRLGELLHQGRYREALAAACEALRAEPSD), 246 to 278 (IVKIYRAESYAGLQEFKAAIEDLNAVLFQLPDW), and 279 to 312 (PEVYFRKGKVLCDAGFLGDALQLFLQCLALDEDF). A compositionally biased stretch (polar residues) spans 359-370 (EESQSLNEPSPK). Positions 359-388 (EESQSLNEPSPKQSEEIPEVTSEPVKGSLN) are disordered. A Phosphoserine modification is found at Ser431. The RING-type 2 zinc finger occupies 479–517 (CSLCMRLFFEPVTTPCGHSFCKNCLERCLDHAPYCPLCK). Residues 558 to 768 (TAELSHLTKN…KIQHILTYFS (211 aa)) form the Lon N-terminal domain.

This Homo sapiens (Human) protein is LON peptidase N-terminal domain and RING finger protein 1 (LONRF1).